The primary structure comprises 244 residues: Aspartate/glutamate leucyltransferase (244 aa).

This sequence belongs to the R-transferase family. Bpt subfamily.

It is found in the cytoplasm. It carries out the reaction N-terminal L-glutamyl-[protein] + L-leucyl-tRNA(Leu) = N-terminal L-leucyl-L-glutamyl-[protein] + tRNA(Leu) + H(+). The catalysed reaction is N-terminal L-aspartyl-[protein] + L-leucyl-tRNA(Leu) = N-terminal L-leucyl-L-aspartyl-[protein] + tRNA(Leu) + H(+). In terms of biological role, functions in the N-end rule pathway of protein degradation where it conjugates Leu from its aminoacyl-tRNA to the N-termini of proteins containing an N-terminal aspartate or glutamate. The polypeptide is Aspartate/glutamate leucyltransferase (Bordetella parapertussis (strain 12822 / ATCC BAA-587 / NCTC 13253)).